A 504-amino-acid polypeptide reads, in one-letter code: Glycerol kinase (504 aa).

Residue T13 participates in ADP binding. Residues T13, T14, and S15 each contribute to the ATP site. T13 contacts sn-glycerol 3-phosphate. R17 contacts ADP. The sn-glycerol 3-phosphate site is built by R83, E84, and Y135. Glycerol-binding residues include R83, E84, and Y135. Position 231 is a phosphohistidine; by HPr (H231). Sn-glycerol 3-phosphate is bound at residue D245. Positions 245 and 246 each coordinate glycerol. Residues T267 and G310 each contribute to the ADP site. 4 residues coordinate ATP: T267, G310, Q314, and G411. ADP contacts are provided by G411 and N415.

Belongs to the FGGY kinase family. As to quaternary structure, homotetramer and homodimer (in equilibrium). In terms of processing, the phosphoenolpyruvate-dependent sugar phosphotransferase system (PTS), including enzyme I, and histidine-containing protein (HPr) are required for the phosphorylation, which leads to the activation of the enzyme.

It catalyses the reaction glycerol + ATP = sn-glycerol 3-phosphate + ADP + H(+). It participates in polyol metabolism; glycerol degradation via glycerol kinase pathway; sn-glycerol 3-phosphate from glycerol: step 1/1. Activated by phosphorylation and inhibited by fructose 1,6-bisphosphate (FBP). Functionally, key enzyme in the regulation of glycerol uptake and metabolism. Catalyzes the phosphorylation of glycerol to yield sn-glycerol 3-phosphate. This chain is Glycerol kinase, found in Ligilactobacillus salivarius (strain UCC118) (Lactobacillus salivarius).